The chain runs to 83 residues: Large ribosomal subunit protein bL31B (83 aa).

Belongs to the bacterial ribosomal protein bL31 family. Type B subfamily. As to quaternary structure, part of the 50S ribosomal subunit.

In Leifsonia xyli subsp. xyli (strain CTCB07), this protein is Large ribosomal subunit protein bL31B.